A 151-amino-acid chain; its full sequence is Cytochrome c-type biogenesis protein CcmE (151 aa).

Over 1–9 (MKGLKKKRR) the chain is Cytoplasmic. The helical; Signal-anchor for type II membrane protein transmembrane segment at 10 to 30 (IQIITLAFVALAGSTALIGYA) threads the bilayer. Over 31 to 151 (MRDGINFFRS…FQHTEDQPQG (121 aa)) the chain is Periplasmic. Heme contacts are provided by histidine 123 and tyrosine 127.

The protein belongs to the CcmE/CycJ family.

It is found in the cell inner membrane. Heme chaperone required for the biogenesis of c-type cytochromes. Transiently binds heme delivered by CcmC and transfers the heme to apo-cytochromes in a process facilitated by CcmF and CcmH. This is Cytochrome c-type biogenesis protein CcmE from Cereibacter sphaeroides (strain ATCC 17025 / ATH 2.4.3) (Rhodobacter sphaeroides).